We begin with the raw amino-acid sequence, 442 residues long: Proline--tRNA ligase (442 aa).

The protein belongs to the class-II aminoacyl-tRNA synthetase family. ProS type 2 subfamily. As to quaternary structure, homodimer.

Its subcellular location is the cytoplasm. It carries out the reaction tRNA(Pro) + L-proline + ATP = L-prolyl-tRNA(Pro) + AMP + diphosphate. Catalyzes the attachment of proline to tRNA(Pro) in a two-step reaction: proline is first activated by ATP to form Pro-AMP and then transferred to the acceptor end of tRNA(Pro). This is Proline--tRNA ligase from Brucella abortus (strain S19).